The chain runs to 468 residues: Peroxisome proliferator-activated receptor alpha (468 aa).

Residues 99 to 173 (NIECRICGDK…VGMSHNAIRF (75 aa)) constitute a DNA-binding region (nuclear receptor). 2 consecutive NR C4-type zinc fingers follow at residues 102–122 (CRIC…CEGC) and 139–161 (CDRS…FHKC). An NR LBD domain is found at 239–466 (FVIHDMETLC…HPLLQEIYRD (228 aa)). The indeglitazar site is built by Ser280, Tyr314, and Tyr464. A required for heterodimerization with RXRA region spans residues 304–433 (DQVTLLKYGV…PKLLQKMADL (130 aa)).

It belongs to the nuclear hormone receptor family. NR1 subfamily. As to quaternary structure, heterodimer; with RXRA. This heterodimerization is required for DNA binding and transactivation activity. Interacts with NCOA3 coactivator. Interacts with CITED2; the interaction stimulates its transcriptional activity. Also interacts with PPARBP in vitro. Interacts with AKAP13, LPIN1, PRDM16 and coactivator NCOA6. Interacts with ASXL1 and ASXL2. Interacts with PER2. Interacts with SIRT1; the interaction seems to be modulated by NAD(+) levels. Interacts with CRY1 and CRY2. In hepatocytes, interacts with PAQR3 and HUWE1; the interactions promote PPARA poylubiquitination and HUWE1-mediated degradation. Ubiquitinated by E3 ubiquitin-protein ligase HUWE1; leading to proteasomal degradation. Post-translationally, phosphorylated. As to expression, skeletal muscle, liver, heart and kidney. Expressed in monocytes.

It is found in the nucleus. In terms of biological role, ligand-activated transcription factor. Key regulator of lipid metabolism. Activated by the endogenous ligand 1-palmitoyl-2-oleoyl-sn-glycerol-3-phosphocholine (16:0/18:1-GPC). Activated by oleylethanolamide, a naturally occurring lipid that regulates satiety. Receptor for peroxisome proliferators such as hypolipidemic drugs and fatty acids. Regulates the peroxisomal beta-oxidation pathway of fatty acids. Functions as a transcription activator for the ACOX1 and P450 genes. Transactivation activity requires heterodimerization with RXRA and is antagonized by NR2C2. May be required for the propagation of clock information to metabolic pathways regulated by PER2. The sequence is that of Peroxisome proliferator-activated receptor alpha (PPARA) from Homo sapiens (Human).